The following is a 120-amino-acid chain: Large ribosomal subunit protein eL18 (120 aa).

The protein belongs to the eukaryotic ribosomal protein eL18 family.

This chain is Large ribosomal subunit protein eL18, found in Pyrococcus abyssi (strain GE5 / Orsay).